Here is a 214-residue protein sequence, read N- to C-terminus: Adenylate kinase (214 aa).

10–15 (GAGKGT) is a binding site for ATP. Residues 30 to 59 (STGDMLRAAVKAGTPLGLEAKKVMDAGQLV) are NMP. AMP is bound by residues T31, R36, 57-59 (QLV), 85-88 (GFPR), and Q92. Residues 122–159 (GRRVHPGSGRVYHIVYNPPKVEGKDDVTGEDLAIRPDD) form an LID region. Residues R123 and 132 to 133 (VY) contribute to the ATP site. 2 residues coordinate AMP: R156 and R167. Q200 lines the ATP pocket.

The protein belongs to the adenylate kinase family. Monomer.

The protein localises to the cytoplasm. The enzyme catalyses AMP + ATP = 2 ADP. It participates in purine metabolism; AMP biosynthesis via salvage pathway; AMP from ADP: step 1/1. Functionally, catalyzes the reversible transfer of the terminal phosphate group between ATP and AMP. Plays an important role in cellular energy homeostasis and in adenine nucleotide metabolism. The polypeptide is Adenylate kinase (Shewanella loihica (strain ATCC BAA-1088 / PV-4)).